Reading from the N-terminus, the 114-residue chain is T cell receptor beta variable 5-8 (114 aa).

Residues 1–21 (MGPRLLFWALLCLLGTGPVEA) form the signal peptide. Positions 22 to 114 (GVTQSPTHLI…SALYLCASSL (93 aa)) constitute an Ig-like domain. Residues Cys42 and Cys110 are joined by a disulfide bond. Residue Asn90 is glycosylated (N-linked (GlcNAc...) asparagine).

As to quaternary structure, alpha-beta TR is a heterodimer composed of an alpha and beta chain; disulfide-linked. The alpha-beta TR is associated with the transmembrane signaling CD3 coreceptor proteins to form the TR-CD3 (TcR or TCR). The assembly of alpha-beta TR heterodimers with CD3 occurs in the endoplasmic reticulum where a single alpha-beta TR heterodimer associates with one CD3D-CD3E heterodimer, one CD3G-CD3E heterodimer and one CD247 homodimer forming a stable octameric structure. CD3D-CD3E and CD3G-CD3E heterodimers preferentially associate with TR alpha and TR beta chains, respectively. The association of the CD247 homodimer is the last step of TcR assembly in the endoplasmic reticulum and is required for transport to the cell surface.

The protein localises to the cell membrane. In terms of biological role, v region of the variable domain of T cell receptor (TR) beta chain that participates in the antigen recognition. Alpha-beta T cell receptors are antigen specific receptors which are essential to the immune response and are present on the cell surface of T lymphocytes. Recognize peptide-major histocompatibility (MH) (pMH) complexes that are displayed by antigen presenting cells (APC), a prerequisite for efficient T cell adaptive immunity against pathogens. Binding of alpha-beta TR to pMH complex initiates TR-CD3 clustering on the cell surface and intracellular activation of LCK that phosphorylates the ITAM motifs of CD3G, CD3D, CD3E and CD247 enabling the recruitment of ZAP70. In turn ZAP70 phosphorylates LAT, which recruits numerous signaling molecules to form the LAT signalosome. The LAT signalosome propagates signal branching to three major signaling pathways, the calcium, the mitogen-activated protein kinase (MAPK) kinase and the nuclear factor NF-kappa-B (NF-kB) pathways, leading to the mobilization of transcription factors that are critical for gene expression and essential for T cell growth and differentiation. The T cell repertoire is generated in the thymus, by V-(D)-J rearrangement. This repertoire is then shaped by intrathymic selection events to generate a peripheral T cell pool of self-MH restricted, non-autoaggressive T cells. Post-thymic interaction of alpha-beta TR with the pMH complexes shapes TR structural and functional avidity. In Homo sapiens (Human), this protein is T cell receptor beta variable 5-8.